A 66-amino-acid chain; its full sequence is Beta-toxin ChFII.7 (66 aa).

In terms of domain architecture, LCN-type CS-alpha/beta spans 1–66 (KEGYLVNHST…VWPLPKKTCN (66 aa)). 4 disulfides stabilise this stretch: C12–C65, C16–C41, C25–C46, and C29–C48. N66 bears the Asparagine amide mark.

Expressed by the venom gland.

It localises to the secreted. In terms of biological role, beta toxins bind voltage independently at site-4 of sodium channels (Nav) and shift the activation voltage toward more negative potentials, thereby affecting sodium channel activation CC and promoting spontaneous and repetitive firing. The polypeptide is Beta-toxin ChFII.7 (Centruroides hirsutipalpus (Scorpion)).